The sequence spans 195 residues: dTTP/UTP pyrophosphatase (195 aa).

D73 acts as the Proton acceptor in catalysis.

It belongs to the Maf family. YhdE subfamily. Requires a divalent metal cation as cofactor.

Its subcellular location is the cytoplasm. It carries out the reaction dTTP + H2O = dTMP + diphosphate + H(+). It catalyses the reaction UTP + H2O = UMP + diphosphate + H(+). In terms of biological role, nucleoside triphosphate pyrophosphatase that hydrolyzes dTTP and UTP. May have a dual role in cell division arrest and in preventing the incorporation of modified nucleotides into cellular nucleic acids. The protein is dTTP/UTP pyrophosphatase of Desulfotalea psychrophila (strain LSv54 / DSM 12343).